Here is a 122-residue protein sequence, read N- to C-terminus: Large ribosomal subunit protein uL18 (122 aa).

The segment covering 1 to 11 (MLKKPDRNALR) has biased composition (basic and acidic residues). The segment at 1–22 (MLKKPDRNALRDKRRRRVRKKI) is disordered. Over residues 12–22 (DKRRRRVRKKI) the composition is skewed to basic residues.

This sequence belongs to the universal ribosomal protein uL18 family. Part of the 50S ribosomal subunit; part of the 5S rRNA/L5/L18/L25 subcomplex. Contacts the 5S and 23S rRNAs.

Functionally, this is one of the proteins that bind and probably mediate the attachment of the 5S RNA into the large ribosomal subunit, where it forms part of the central protuberance. In Pelotomaculum thermopropionicum (strain DSM 13744 / JCM 10971 / SI), this protein is Large ribosomal subunit protein uL18.